Reading from the N-terminus, the 1077-residue chain is Endo-1,4-beta-xylanase Y (1077 aa).

The N-terminal stretch at 1–26 is a signal peptide; sequence MKNKRVLAKITALVVLLGVFFVLPSN. The region spanning 33–180 is the CBM-cenC 1 domain; that stretch reads DYEVVHDTFE…IFDDVTITRK (148 aa). Residues 189–538 form the GH10 domain; that stretch reads YAANAVLKDM…KPAYNAVASI (350 aa). Glu337 serves as the catalytic Proton donor. The active-site Nucleophile is the Glu460. Positions 543 to 563 are disordered; that stretch reads EWGDGNNPAGGGGGGKPEEPD. Residues 565 to 714 enclose the CBM-cenC 2 domain; the sequence is NGYYYHDTFE…YIDEAIGAVA (150 aa). A Dockerin domain is found at 728 to 796; the sequence is PPVLLGDVNG…LLRVIDKFPV (69 aa).

Belongs to the glycosyl hydrolase 10 (cellulase F) family.

The catalysed reaction is Endohydrolysis of (1-&gt;4)-beta-D-xylosidic linkages in xylans.. The protein is Endo-1,4-beta-xylanase Y (xynY) of Acetivibrio thermocellus (Hungateiclostridium thermocellum).